Reading from the N-terminus, the 239-residue chain is Probable transcriptional regulatory protein LMOf2365_0385 (239 aa).

Belongs to the TACO1 family. YeeN subfamily.

The protein resides in the cytoplasm. The polypeptide is Probable transcriptional regulatory protein LMOf2365_0385 (Listeria monocytogenes serotype 4b (strain F2365)).